The chain runs to 596 residues: Nuclear receptor subfamily 2 group C member 2 (596 aa).

At Ser-19 the chain carries Phosphoserine; by MAPK. A Phosphoserine modification is found at Ser-46. Phosphoserine; by MAPK is present on residues Ser-55 and Ser-68. A Phosphoserine modification is found at Ser-98. A DNA-binding region (nuclear receptor) is located at residues 114–189; sequence VEYCVVCGDK…MGMKMESVQS (76 aa). 2 consecutive NR C4-type zinc fingers follow at residues 117 to 137 and 153 to 177; these read CVVCGDKASGRHYGAVSCEGC and CRSSQDCIINKHHRNRCQFCRLKKC. Residue Lys-192 forms a Glycyl lysine isopeptide (Lys-Gly) (interchain with G-Cter in SUMO2) linkage. Ser-219 is subject to Phosphoserine. Residue Lys-231 is modified to N6-acetyllysine. The region spanning 341-583 is the NR LBD domain; it reads GSIHVISRDQ…SIIPYILKME (243 aa).

Belongs to the nuclear hormone receptor family. NR2 subfamily. In terms of assembly, homodimer; can bind DNA as homodimer. Heterodimer; binds DNA as a heterodimer with NR2C1 required for chromatin remodeling and for binding to promoter regions such as globin DR1 repeats. Interacts with NR2C2AP; the interaction represses selective NR2C2-mediated transcriptional activity. Interacts with PCAF; the interaction preferentially occurs on the non-phosphorylated form and induces NR2C2-mediated transactivation activity and does not require the ligand-binding domain. Interacts (MAPK-mediated phosphorylated form) with NRIP1; the interaction promotes repression of NR2C2-mediated activity. Interacts with NLRP10. Interacts (via ligand-binding region) with transcriptional corepressor JAZF1; the interaction promotes NR2C2-mediated transcriptional repression. Post-translationally, phosphorylation on Ser-19 and Ser-68 is an important regulator of NR2C2-mediated transcriptional activity. Phosphorylation on these residues recruits the corepressor, NRIP1, leading to transcripional repression, whereas the non-phosphorylated form preferentially recruits the coactivator, PCAF. As to expression, expressed, during embryogenesis, in perichondrium, developing glomeruli structures and tubules of kidney, as well as in intestiinal villi. Also expressed in lung and hair follicles.

The protein localises to the nucleus. Its function is as follows. Orphan nuclear receptor that can act as a repressor or activator of transcription. An important repressor of nuclear receptor signaling pathways such as retinoic acid receptor, retinoid X, vitamin D3 receptor, thyroid hormone receptor and estrogen receptor pathways. May regulate gene expression during the late phase of spermatogenesis. Activates transcriptional activity of LHCG and is antagonist of PPARA-mediated transactivation. Together with NR2C1, forms the core of the DRED (direct repeat erythroid-definitive) complex that represses embryonic and fetal globin transcription including that of GATA1. Binds to hormone response elements (HREs) consisting of two 5'-AGGTCA-3' half site direct repeat consensus sequences. Plays a fundamental role in early embryonic development and embryonic stem cells. Required for normal spermatogenesis and cerebellum development. Appears to be important for neurodevelopmentally regulated behavior. This chain is Nuclear receptor subfamily 2 group C member 2 (Nr2c2), found in Mus musculus (Mouse).